The following is a 616-amino-acid chain: Heme A synthase-mitochondrial ferredoxin fusion protein (616 aa).

The N-terminal 45 residues, 1–45 (MNISRSSGLMRQFLLQPLRKGCDISCLGRSSWRMSRSFSGSSVLN), are a transit peptide targeting the mitochondrion. Residues 45-465 (NEINLSRTKN…AALSLAQRLH (421 aa)) are heme a synthase cox15-like. Residues 46 to 97 (EINLSRTKNLFLNDCKFNKNSFEKFFARRLSNSVAPTPGGILQETEKIPSKK) are Mitochondrial matrix-facing. Residues 98–118 (VAFWLLGSSALVLAIVVVGGI) traverse the membrane as a helical segment. Topologically, residues 119–182 (TRLTESGLSI…NIFFWEWFHR (64 aa)) are mitochondrial intermembrane. His181 is a binding site for heme o. A helical transmembrane segment spans residues 183–203 (VLGRGIGLTILLPSIYMIVTK). Over 204 to 212 (RASPWLSKR) the chain is Mitochondrial matrix. A helical transmembrane segment spans residues 213–233 (LIGLTGLVGLQGVIGWWMVKS). The Mitochondrial intermembrane segment spans residues 234–254 (GLSEELFSDGSHPRVSHYRLA). The chain crosses the membrane as a helical span at residues 255 to 275 (THLAAAVALYIGLVWTGHGIL). His256 serves as a coordination point for heme o. The Mitochondrial matrix segment spans residues 276-311 (QRHAFLKSMKSGSTSQLTSMVSSVQKMKGFRTSVNS). Residues 312–332 (FVGLVLITLLSGAFVAGLDAG) traverse the membrane as a helical segment. The Mitochondrial intermembrane segment spans residues 333–380 (MIYCTFPEMGEGRLAPSKSELFDQRFCRKDDKSDLIWRNMIDNPSLVQ). A helical transmembrane segment spans residues 381-401 (LEHRILAITTFVAACGLFIFS). Residue His383 participates in heme b binding. Topologically, residues 402-417 (RAKRNILPKKIKTSIN) are mitochondrial matrix. Residues 418–438 (VVTGVVTAQATLGIMTLIYVV) traverse the membrane as a helical segment. Position 439 (Pro439) is a topological domain, mitochondrial intermembrane. The chain crosses the membrane as a helical span at residues 440-460 (VPLAALHQAGSLVTLTAALSL). His446 is a heme b binding site. Residues 461–616 (AQRLHPEYAL…RNIRLERPKA (156 aa)) lie on the Mitochondrial matrix side of the membrane. Positions 502-606 (FRPSFHSEIK…GIRVRIPAQT (105 aa)) constitute a 2Fe-2S ferredoxin-type domain. Positions 516 to 616 (GTGIKVFFVT…RNIRLERPKA (101 aa)) are mitochondrial ferredoxin yah1-like. 4 residues coordinate [2Fe-2S] cluster: Cys541, Cys547, Cys550, and Cys587.

In the N-terminal section; belongs to the COX15/CtaA family. Type 2 subfamily. The protein in the C-terminal section; belongs to the adrenodoxin/putidaredoxin family. In terms of assembly, homodimer. Requires heme b as cofactor. [2Fe-2S] cluster serves as cofactor. In terms of processing, the etp1 preprotein is cleaved into 2 chains after imort into mitochondria. The N-terminal chain containing a heme A synthase cox15-like domain etp1(cd) is a subunit of the membrane-embedded cytochrome c oxidase complex and functions in the respiratory chain. The C-terminal chain containing a ferredoxin yah1-like domain etp1(fd) is released and serves in the matrix as electron transfer protein.

The protein localises to the mitochondrion inner membrane. The protein resides in the mitochondrion matrix. The enzyme catalyses Fe(II)-heme o + 2 A + H2O = Fe(II)-heme a + 2 AH2. The protein operates within porphyrin-containing compound metabolism; heme A biosynthesis; heme A from heme O: step 1/1. Its function is as follows. Catalyzes the second reaction in the biosynthesis of heme A, a prosthetic group of mitochondrial cytochrome c oxidase (CcO). Heme A is synthesized from heme B by two sequential enzymatic reactions catalyzed by heme O synthase (HOS) and heme A synthase (HAS). HAS catalyzes the conversion of heme O to heme A by two successive hydroxylations of the methyl group at C8, in a reaction that involves matrix ferredoxin and ferredoxin reductase. The first hydroxylation forms heme I, the second hydroxylation results in an unstable dihydroxymethyl group, which spontaneously dehydrates, resulting in the formyl group of heme A. Iron-sulfur protein that transfers electrons in a wide variety of metabolic reactions. Involved in heme A biosynthesis and in iron-sulfur cluster assembly. Transfers electrons from adrenodoxin reductase arh1 to heme A synthase etp1(cd), a heme protein that catalyzes the conversion of heme O to heme A. Required for the de novo synthesis of Fe-S clusters on iron sulfur cluster assembly protein isu1. Interact in its reduced state with isu1 to productively deliver electrons for Fe-S cluster synthesis. Essential for coenzyme Q biosynthesis. May transfer the electrons required for the hydroxylation reaction performed by coq6. The polypeptide is Heme A synthase-mitochondrial ferredoxin fusion protein (Schizosaccharomyces pombe (strain 972 / ATCC 24843) (Fission yeast)).